A 91-amino-acid polypeptide reads, in one-letter code: Small ribosomal subunit protein bS20 (91 aa).

The tract at residues 1–23 (MANTPSAKKRAKQAEKRRSHNAS) is disordered. The segment covering 7 to 20 (AKKRAKQAEKRRSH) has biased composition (basic residues).

Belongs to the bacterial ribosomal protein bS20 family.

In terms of biological role, binds directly to 16S ribosomal RNA. This Pseudomonas paraeruginosa (strain DSM 24068 / PA7) (Pseudomonas aeruginosa (strain PA7)) protein is Small ribosomal subunit protein bS20.